The sequence spans 486 residues: MFAAGLAPFYASNFSLWSAAYCSSAGPGGCSFPLDPAAVKKPSFCIADILHAGVGEPGATPEGLAGASAAALTAHLGSAHPHASFQAAARSPLRPTPVVAPSEVPAGFPQRLSPLSAAYHHHHPQQQQQQQQPQQQQPPPPPRAGALQPPASGSRVVPNPHQSGSAPAPSSKDLKFGIDRILSAEFDPKVKEGNTLRDLTSLLTGGRPAGVHLPGLQPSAGQFFASLDPINEASAILSPLSSNPRNSVQHQFQDTFPGPYAVLTKDTMPQTYKRKRSWSRAVFSNLQRKGLEKRFEIQKYVTKPDRKQLAAMLGLTDAQVKVWFQNRRMKWRHSKEAQAQKDKDKEAGEKPSGGAPAPDGEPEERSPSRSEGEAESESSDPESLDMAPSDTERTEGTERSLHQTTVIKASAAGALLAASSGGSGGSGGGGGGGFNFGGLSSGSTTSAGSSGSHSSGGASELLPAPQPSLSSAPKSPEPVPAPLGGL.

2 disordered regions span residues 83 to 173 (ASFQ…SSKD) and 330 to 486 (KWRH…LGGL). Residues 125–135 (QQQQQQQQPQQ) show a composition bias toward low complexity. Positions 276 to 335 (RSWSRAVFSNLQRKGLEKRFEIQKYVTKPDRKQLAAMLGLTDAQVKVWFQNRRMKWRHSK) form a DNA-binding region, homeobox. Composition is skewed to basic and acidic residues over residues 334–349 (SKEA…EAGE) and 363–372 (EERSPSRSEG). Over residues 373 to 383 (EAESESSDPES) the composition is skewed to acidic residues. The segment covering 390 to 401 (DTERTEGTERSL) has biased composition (basic and acidic residues). Residues 409-420 (ASAAGALLAASS) show a composition bias toward low complexity. A compositionally biased stretch (gly residues) spans 421–440 (GGSGGSGGGGGGGFNFGGLS). A compositionally biased stretch (low complexity) spans 441-474 (SGSTTSAGSSGSHSSGGASELLPAPQPSLSSAPK). Pro residues predominate over residues 475 to 486 (SPEPVPAPLGGL).

It belongs to the H2.0 homeobox family.

It is found in the nucleus. Transcription factor required for TBX21/T-bet-dependent maturation of Th1 cells as well as maintenance of Th1-specific gene expression. Involved in embryogenesis and hematopoiesis. In Bos taurus (Bovine), this protein is H2.0-like homeobox protein (HLX).